A 663-amino-acid polypeptide reads, in one-letter code: Putative ankyrin repeat protein R219 (663 aa).

ANK repeat units follow at residues 91–118 (FRIK…GYKV), 119–148 (DFDS…KLSS), 200–229 (ANQQ…KDGT), 258–288 (DWHV…KINP), and 322–351 (YFSH…GITV).

The sequence is that of Putative ankyrin repeat protein R219 from Acanthamoeba polyphaga mimivirus (APMV).